Consider the following 313-residue polypeptide: Biotin synthase (313 aa).

The 231-residue stretch at 28-258 folds into the Radical SAM core domain; it reads NFGNDIELCS…LFPQARLRLS (231 aa). [4Fe-4S] cluster-binding residues include Cys46, Cys50, and Cys53. [2Fe-2S] cluster is bound by residues Cys90, Cys121, Cys181, and Arg256.

This sequence belongs to the radical SAM superfamily. Biotin synthase family. As to quaternary structure, homodimer. [4Fe-4S] cluster is required as a cofactor. It depends on [2Fe-2S] cluster as a cofactor.

The enzyme catalyses (4R,5S)-dethiobiotin + (sulfur carrier)-SH + 2 reduced [2Fe-2S]-[ferredoxin] + 2 S-adenosyl-L-methionine = (sulfur carrier)-H + biotin + 2 5'-deoxyadenosine + 2 L-methionine + 2 oxidized [2Fe-2S]-[ferredoxin]. It functions in the pathway cofactor biosynthesis; biotin biosynthesis; biotin from 7,8-diaminononanoate: step 2/2. Its function is as follows. Catalyzes the conversion of dethiobiotin (DTB) to biotin by the insertion of a sulfur atom into dethiobiotin via a radical-based mechanism. The polypeptide is Biotin synthase (Francisella tularensis subsp. tularensis (strain WY96-3418)).